The following is a 203-amino-acid chain: Outer-membrane lipoprotein carrier protein (203 aa).

Positions 1–21 (MKKLAITCALLSGMVVSQVWA) are cleaved as a signal peptide.

The protein belongs to the LolA family. Monomer.

The protein resides in the periplasm. Its function is as follows. Participates in the translocation of lipoproteins from the inner membrane to the outer membrane. Only forms a complex with a lipoprotein if the residue after the N-terminal Cys is not an aspartate (The Asp acts as a targeting signal to indicate that the lipoprotein should stay in the inner membrane). The polypeptide is Outer-membrane lipoprotein carrier protein (Klebsiella pneumoniae subsp. pneumoniae (strain ATCC 700721 / MGH 78578)).